The sequence spans 193 residues: Ion-translocating oxidoreductase complex subunit B (193 aa).

The tract at residues 1–23 (MTFLFIVITLLALIFGAILGFAS) is hydrophobic. The 4Fe-4S domain occupies 29–87 (EADPVVEKIDAILPQSQCGQCGYPGCKPYAEAICNGDEITKCIPGGQTTIVKIAEILGV). [4Fe-4S] cluster is bound by residues Cys-46, Cys-49, Cys-54, Cys-70, Cys-110, Cys-113, Cys-116, Cys-120, Cys-140, Cys-143, Cys-146, and Cys-150. 2 consecutive 4Fe-4S ferredoxin-type domains span residues 101–130 (KVAF…GTNK) and 131–160 (AMHT…MIPV).

The protein belongs to the 4Fe4S bacterial-type ferredoxin family. RnfB subfamily. In terms of assembly, the complex is composed of six subunits: RnfA, RnfB, RnfC, RnfD, RnfE and RnfG. [4Fe-4S] cluster is required as a cofactor.

It is found in the cell inner membrane. Functionally, part of a membrane-bound complex that couples electron transfer with translocation of ions across the membrane. This chain is Ion-translocating oxidoreductase complex subunit B, found in Haemophilus influenzae (strain 86-028NP).